The sequence spans 341 residues: HTH-type transcriptional repressor PurR (341 aa).

The HTH lacI-type domain occupies 2-56 (ATIKDVAKRAGVSTTTVSHVINKTRFVAEETKAAVGAAIKELHYSPSAVARSLKV). A DNA-binding region (H-T-H motif) is located at residues 4–23 (IKDVAKRAGVSTTTVSHVIN). A DNA-binding region spans residues 48 to 56 (SAVARSLKV). Hypoxanthine is bound by residues Y73, R190, T192, F221, and D275.

As to quaternary structure, homodimer.

It participates in purine metabolism; purine nucleotide biosynthesis [regulation]. Its function is as follows. Is the main repressor of the genes involved in the de novo synthesis of purine nucleotides, regulating purB, purC, purEK, purF, purHD, purL, purMN and guaBA expression. PurR is allosterically activated to bind its cognate DNA by binding the purine corepressors, hypoxanthine or guanine, thereby effecting transcription repression. The sequence is that of HTH-type transcriptional repressor PurR from Serratia proteamaculans (strain 568).